The chain runs to 474 residues: Transmembrane transporter FVEG_12640 (474 aa).

The span at 1-15 (MASPTISSMEQYTPS) shows a compositional bias: polar residues. The disordered stretch occupies residues 1–39 (MASPTISSMEQYTPSSKDEKIVPLHGDAAGSDTEKGESR). 10 consecutive transmembrane segments (helical) span residues 72-92 (ILAIPGALGALGSVGGSLCIV), 133-153 (LVGVQIIVAQVLISAGGIVTS), 164-184 (GTCTVMFALVSAILITLFSSI), 192-212 (WLTWFGFITFVLGVFIFVVAV), 231-251 (WAPIAYPSFVVGMINATNIFI), 275-295 (ACLVAGFIVGAMYLSFSLVIY), 317-337 (VAYGVSLPGLILGVGIYQHVA), 364-384 (LGINLALGTAAFIVAEAVPIL), 387-407 (LLGLAGSLCFAPFSLVFPALL), and 431-451 (LIMILGFYMIVAGTYSVAVLI).

It belongs to the amino acid/polyamine transporter 2 family.

The protein localises to the membrane. Functionally, transmembrane transporter; part of the Fusarium detoxification of benzoxazolinone cluster 2 (FDB2) involved in the degradation of benzoxazolinones produced by the host plant. Maize, wheat, and rye produce the 2 benzoxazinone phytoanticipins 2,4-dihy-droxy-7-methoxy-1,4-benzoxazin-3-one (DIMBOA) and 2,4-dihydroxy-1,4-benzoxazin-3-one (DIBOA) that, due to their inherent instability once released, spontaneously degrade to the more stable corresponding benzoxazolinones, 6-methoxy-2-benzoxazolinone (MBOA) and 2-benzoxazolinone (BOA), respectively. Might be involved in the transport of metabolites of benzoxazolinone degradation. The polypeptide is Transmembrane transporter FVEG_12640 (Gibberella moniliformis (strain M3125 / FGSC 7600) (Maize ear and stalk rot fungus)).